Reading from the N-terminus, the 383-residue chain is Acetylornithine deacetylase (383 aa).

His-80 is a Zn(2+) binding site. The active site involves Asp-82. Asp-112 provides a ligand contact to Zn(2+). The active site involves Glu-144. Zn(2+) is bound by residues Glu-145, Glu-169, and His-355.

It belongs to the peptidase M20A family. ArgE subfamily. As to quaternary structure, homodimer. The cofactor is Zn(2+). It depends on Co(2+) as a cofactor. Requires glutathione as cofactor.

Its subcellular location is the cytoplasm. The catalysed reaction is N(2)-acetyl-L-ornithine + H2O = L-ornithine + acetate. The protein operates within amino-acid biosynthesis; L-arginine biosynthesis; L-ornithine from N(2)-acetyl-L-ornithine (linear): step 1/1. In terms of biological role, catalyzes the hydrolysis of the amide bond of N(2)-acetylated L-amino acids. Cleaves the acetyl group from N-acetyl-L-ornithine to form L-ornithine, an intermediate in L-arginine biosynthesis pathway, and a branchpoint in the synthesis of polyamines. The protein is Acetylornithine deacetylase of Salmonella paratyphi A (strain ATCC 9150 / SARB42).